The sequence spans 292 residues: Elongation factor Ts (292 aa).

The involved in Mg(2+) ion dislocation from EF-Tu stretch occupies residues 80-83; the sequence is TDFV.

This sequence belongs to the EF-Ts family.

It is found in the cytoplasm. Its function is as follows. Associates with the EF-Tu.GDP complex and induces the exchange of GDP to GTP. It remains bound to the aminoacyl-tRNA.EF-Tu.GTP complex up to the GTP hydrolysis stage on the ribosome. The protein is Elongation factor Ts of Psychrobacter sp. (strain PRwf-1).